Reading from the N-terminus, the 286-residue chain is Nucleotide-binding protein VC_2532 (286 aa).

8-15 contacts ATP; sequence GQSGAGKS. Residue 56–59 coordinates GTP; sequence DIRN.

Belongs to the RapZ-like family.

Functionally, displays ATPase and GTPase activities. In Vibrio cholerae serotype O1 (strain ATCC 39315 / El Tor Inaba N16961), this protein is Nucleotide-binding protein VC_2532.